The sequence spans 2531 residues: Highly reducing polyketide synthase gloL (2531 aa).

Positions 15–435 (YEPLAIVGMG…GANAHVILDS (421 aa)) constitute a Ketosynthase family 3 (KS3) domain. Active-site for beta-ketoacyl synthase activity residues include Cys-187, His-322, and His-358. Residues 449-525 (TNGLSVNGHS…GHSVNGHSKP (77 aa)) are disordered. Positions 453-503 (SVNGHSINGNSVNGHSVNGHSTNGHSINGNSVNGHSVNGNSVNGHSTNGHS) are enriched in low complexity. Over residues 505 to 521 (NGHSANGNSINGHSVNG) the composition is skewed to polar residues. The malonyl-CoA:ACP transacylase (MAT) domain stretch occupies residues 602–909 (MVFTGQGAQW…VTALERGKDC (308 aa)). The segment at 971 to 1099 (HEILGSRTVE…GQIRSGTDNP (129 aa)) is N-terminal hotdog fold. The tract at residues 971–1251 (HEILGSRTVE…GGQFSPIEED (281 aa)) is dehydratase (DH) domain. The PKS/mFAS DH domain occupies 971–1254 (HEILGSRTVE…FSPIEEDSSD (284 aa)). His-1003 functions as the Proton acceptor; for dehydratase activity in the catalytic mechanism. Positions 1109–1254 (DHPRSVPSPY…FSPIEEDSSD (146 aa)) are C-terminal hotdog fold. The active-site Proton donor; for dehydratase activity is Asp-1169. The segment at 1419-1597 (DFFTAAGHSK…FSGCDATVYD (179 aa)) is methyltransferase (CMet) domain. The tract at residues 1806–2114 (GLLQTLRWVP…KGSHIGKIVV (309 aa)) is enoyl reductase (ER) (ER) domain. Residues 2139 to 2312 (GYLLVGGLGG…ASVVDIGVMG (174 aa)) form a ketoreductase (KR) domain region. The region spanning 2413-2505 (MSSVETDSSI…ALGLLTIEGL (93 aa)) is the Carrier domain. Ser-2464 bears the O-(pantetheine 4'-phosphoryl)serine mark.

It functions in the pathway mycotoxin biosynthesis. Its function is as follows. Highly reducing polyketide synthase; part of the gene cluster that mediates the biosynthesis of pneumocandins, lipohexapeptides of the echinocandin family that prevent fungal cell wall formation by non-competitive inhibition of beta-1,3-glucan synthase. The 10,12-dimethylmyristoyl side chain is synthesized by the reducing polyketide synthase gloL/GLPKS4. The thioesterase gloN/GLHYD exclusively interacts with gloL/GLPKS4 to maintain turnover of the polyketide side chain. The 10R,12S-dimethylmyristic acid is then transferred to the first thiolation domain of the nonribosomal peptide synthetase gloA/GLNRPS4 by the acyl-AMP ligase gloD/GLligase, followed by its acylation to L-ornithine to trigger elongation of the cyclic hexapeptide. L-ornithine, 4R-hydroxyl-L-proline (generated from L-proline by the dioxygenase gloF/GLOXY2), 3S-hydroxyl-L-homotyrosine (generated by gloG/GLHtyB, gloH/GLHtyA, gloI/GLHtyC, gloJ/GLHtyD and hydroxylated at C-3 by the dioxygenase gloM/GLOXY1), 3R-hydroxyl-L-glutamine (generated from L-glutamine probably by the dioxygenase gloE/GLOXY3) and 3S-hydroxyl-L-proline (generated from L-proline by the dioxygenase gloF/GLOXY2 to yield pneumocandin B0), or 3S-hydroxyl-4S-methyl-L-proline (generated from L-leucine by the dioxygenase gloC/GLOXY4 to yield pneumocandin A0) are sequentially added to the growing chain. The last C domain of gloA/GLNRPS4 is proposed to be responsible for cyclization by condensation to form the peptide bond between L-ornithine and 3S-hydroxyl-4S-methyl-L-proline (for pneumocandin A0) or 3S-hydroxyl-L-proline (for pneumocandin B0). Finally, the subsequent C-4 hydroxylation of 3S-hydroxyl-L-homotyrosine and L-ornithine dihydroxylation at C-4 and C-5 are performed by the cytochrome P450 monooxygenases gloP/GLP450-1 and gloO/GLP450-2, respectively. The polypeptide is Highly reducing polyketide synthase gloL (Glarea lozoyensis (strain ATCC 20868 / MF5171)).